Reading from the N-terminus, the 327-residue chain is Voltage-dependent calcium channel gamma-4 subunit (327 aa).

The Cytoplasmic segment spans residues Met1–Gln9. Residues Met10 to Thr30 form a helical membrane-spanning segment. At Asp31–Ser107 the chain is on the extracellular side. N-linked (GlcNAc...) asparagine glycosylation is found at Asn42 and Asn45. The helical transmembrane segment at Ser108–Gly128 threads the bilayer. Residues Arg129–Asn136 lie on the Cytoplasmic side of the membrane. The helical transmembrane segment at Ile137–Ile157 threads the bilayer. Over Val158–Tyr186 the chain is Extracellular. A helical membrane pass occupies residues Phe187–Ile207. Residues Glu208–Val327 are Cytoplasmic-facing. The interval Ser235–Met261 is disordered. The segment covering Ser246 to Arg256 has biased composition (low complexity). A Phosphoserine modification is found at Ser259.

Belongs to the PMP-22/EMP/MP20 family. CACNG subfamily. Interacts with CACNA1C. Identified in a complex with the L-type calcium channel subunits CACNA1C, CACNA2D1 and either CACNB1 or CACNB2. Acts as an auxiliary subunit for AMPA-selective glutamate receptors (AMPARs). Interacts with GRIA1. As to expression, detected in heart left ventricle.

The protein localises to the cell membrane. Its function is as follows. Regulates the activity of L-type calcium channels that contain CACNA1C as pore-forming subunit. Regulates the trafficking and gating properties of AMPA-selective glutamate receptors (AMPARs), including GRIA1 and GRIA4. Promotes their targeting to the cell membrane and synapses and modulates their gating properties by slowing their rates of activation, deactivation and desensitization and by mediating their resensitization. The protein is Voltage-dependent calcium channel gamma-4 subunit (CACNG4) of Homo sapiens (Human).